Consider the following 857-residue polypeptide: MNIRPSQIKHKQRIASFITHAVVVVMGVLIVSVLFQSYQISSRLMAQEGQRTSVQTSSLIQSLFDFRLAALRIHQDSTAKNASLINALVSRDSSRLDEFFSSVDELELSNAPDLRFISSHDNILWDDGNASFYGIAQQELNKLIRRVAISGNWHLVQTPSEGKSVHILMRRSSLIEAGTGQVVGYLYVGIVLNDNFALLENIRSGSNSENLVLAVDTTPLVSTLKGNEPYSLDYVVHSAKDAMRDSFIVGQTFLEVESVPTYLCVYSIQTNQNVLTLRDNFYFWMAFALISMIGVSIASRWWLQKRIQREIETLMNYTHKLMDLDTKSEFIGSKIYEFDYFGRTLEQSFRRLANKEKQFEDLFNFALSPTMLWNTSGRLIRMNPSAQIQFLREDAQNHFLFEILERQLLPTITNAAQGNNPSDVTTEVDGRVYRWNLSPIMVEGQIISIITQGQDITTIAEAEKQSQAARREAEESARVRAEFLAKMSHELRTPLNGVLGVSQLLKRTPLNDEQREHVAVLCSSGEHLLAVLNDILDFSRLEQGKFRIQKNEFRLKELVCAIDRIYRPLCNEKGLELVVNSNITTAAIVRSDQIRINQILFNLLNNAIKFTHQGSIRVELQLIEGDPLAQLVIQVVDTGIGIREQDLTVIFEPFMQAESTTTREYGGSGLGLTIVHSLVEMLSGQLHVSSEYGIGTRFEIQLPIELVEKPDAPQQLLPAPDPQPLFDKTLRVLLVEDNHTNAFIAQAFCRKYGLDVSWVTDGLQAIEELKIHDYDLVLMDNQLPYLDGVETTRTIKKVLHLPVVVYACTADGLEETRQAFFHAGAEYVLVKPLKEQTLHKALEHFKHHHGQKNAGLN.

2 consecutive transmembrane segments (helical) span residues 14–34 and 283–303; these read IASFITHAVVVVMGVLIVSVL and FWMAFALISMIGVSIASRWWL. In terms of domain architecture, Histidine kinase spans 486–706; sequence KMSHELRTPL…RFEIQLPIEL (221 aa). His489 bears the Phosphohistidine; by autocatalysis mark. Positions 731–846 constitute a Response regulatory domain; the sequence is RVLLVEDNHT…TLHKALEHFK (116 aa). 4-aspartylphosphate is present on Asp780.

Binds the complex formed by AI-2 and LuxP.

It localises to the cell inner membrane. The enzyme catalyses ATP + protein L-histidine = ADP + protein N-phospho-L-histidine.. In terms of biological role, at low cell density, in absence of AI-2 (autoinducer 2), LuxQ has a kinase activity and autophosphorylates on a histidine residue. The phosphoryl group is then transferred to an aspartate residue in the response regulator domain. The phosphoryl group is transferred to LuxU, and ultimately to LuxO. At high cell density, in the presence of AI-2, the kinase activity is inactivated, and the response regulator domain has a phosphatase activity. The sequence is that of Autoinducer 2 sensor kinase/phosphatase LuxQ (luxQ) from Vibrio cholerae serotype O1 (strain ATCC 39315 / El Tor Inaba N16961).